The sequence spans 235 residues: Protein RESISTANCE TO PHYTOPHTHORA 1, chloroplastic (235 aa).

The transit peptide at 1-43 (MNSATTMSASVLNYQILKFFPPQKNGFLKSPLIRGKICRFCVS) directs the protein to the chloroplast. The span at 53–66 (VIEDPKEETQEKSD) shows a compositional bias: basic and acidic residues. The tract at residues 53–92 (VIEDPKEETQEKSDGVIVNSTEEEEERSGENSTSTGPSTV) is disordered. 4 consecutive transmembrane segments (helical) span residues 131–151 (FEVQ…NLIF), 158–178 (IWRL…LRAR), 188–208 (LNYL…FLKS), and 211–231 (VVWS…LGWL).

Its subcellular location is the plastid. It is found in the chloroplast. The protein resides in the membrane. Its function is as follows. Plays a positive role in the immune response to the oomycetes P.infestans, including induced oxidative burst and enhanced expression of defense-related genes. In Solanum tuberosum (Potato), this protein is Protein RESISTANCE TO PHYTOPHTHORA 1, chloroplastic.